A 351-amino-acid chain; its full sequence is Photosystem II D2 protein (351 aa).

Residues 39 to 59 (CSYLALGAWFTGTTFVTSWYT) form a helical membrane-spanning segment. Residue His116 participates in chlorophyll a binding. The helical transmembrane segment at 123–139 (GFCLRQFEIARLVGIRP) threads the bilayer. Residues Gln128 and Asn141 each contribute to the pheophytin a site. A helical membrane pass occupies residues 151-164 (VFVSVFLIYPLGQA). His196 serves as a coordination point for chlorophyll a. A helical transmembrane segment spans residues 206-226 (GALLCAIHGATVENTLFEDGE). Residues His213 and Phe260 each coordinate a plastoquinone. Position 213 (His213) interacts with Fe cation. His267 is a binding site for Fe cation. A helical membrane pass occupies residues 277–293 (GLWTSSIGIIGLALNLR).

It belongs to the reaction center PufL/M/PsbA/D family. PSII is composed of 1 copy each of membrane proteins PsbA, PsbB, PsbC, PsbD, PsbE, PsbF, PsbH, PsbI, PsbJ, PsbK, PsbL, PsbM, PsbT, PsbY, PsbZ, Psb30/Ycf12, at least 3 peripheral proteins of the oxygen-evolving complex and a large number of cofactors. It forms dimeric complexes. The D1/D2 heterodimer binds P680, chlorophylls that are the primary electron donor of PSII, and subsequent electron acceptors. It shares a non-heme iron and each subunit binds pheophytin, quinone, additional chlorophylls, carotenoids and lipids. There is also a Cl(-1) ion associated with D1 and D2, which is required for oxygen evolution. The PSII complex binds additional chlorophylls, carotenoids and specific lipids. serves as cofactor.

It is found in the plastid. Its subcellular location is the chloroplast thylakoid membrane. The catalysed reaction is 2 a plastoquinone + 4 hnu + 2 H2O = 2 a plastoquinol + O2. Functionally, photosystem II (PSII) is a light-driven water:plastoquinone oxidoreductase that uses light energy to abstract electrons from H(2)O, generating O(2) and a proton gradient subsequently used for ATP formation. It consists of a core antenna complex that captures photons, and an electron transfer chain that converts photonic excitation into a charge separation. The D1/D2 (PsbA/PsbD) reaction center heterodimer binds P680, the primary electron donor of PSII as well as several subsequent electron acceptors. D2 is needed for assembly of a stable PSII complex. The polypeptide is Photosystem II D2 protein (Galdieria sulphuraria (Red alga)).